Reading from the N-terminus, the 86-residue chain is Large ribosomal subunit protein bL31 (86 aa).

A disordered region spans residues 65–86; sequence YRMASSDSSEQKDKSSEEKKES. Basic and acidic residues predominate over residues 73-86; sequence SEQKDKSSEEKKES.

The protein belongs to the bacterial ribosomal protein bL31 family. Type A subfamily. In terms of assembly, part of the 50S ribosomal subunit.

Binds the 23S rRNA. The chain is Large ribosomal subunit protein bL31 from Prochlorococcus marinus (strain NATL1A).